The following is a 466-amino-acid chain: 3-isopropylmalate dehydratase large subunit (466 aa).

Positions 347, 407, and 410 each coordinate [4Fe-4S] cluster.

This sequence belongs to the aconitase/IPM isomerase family. LeuC type 1 subfamily. Heterodimer of LeuC and LeuD. [4Fe-4S] cluster is required as a cofactor.

The enzyme catalyses (2R,3S)-3-isopropylmalate = (2S)-2-isopropylmalate. It participates in amino-acid biosynthesis; L-leucine biosynthesis; L-leucine from 3-methyl-2-oxobutanoate: step 2/4. Functionally, catalyzes the isomerization between 2-isopropylmalate and 3-isopropylmalate, via the formation of 2-isopropylmaleate. In Escherichia coli O9:H4 (strain HS), this protein is 3-isopropylmalate dehydratase large subunit.